The sequence spans 908 residues: 5'-3' exoribonuclease 2 homolog (908 aa).

Residues 263 to 280 form a CCHC-type zinc finger; sequence RPCDICNGFGHEMDKCVG. 2 disordered regions span residues 409-457 and 821-908; these read RQRR…VGNY and GGNQ…YRRF. Residues 432 to 454 show a composition bias toward polar residues; it reads HGSLNQSAFGASAVGPNSQQRSV. A Phosphoserine modification is found at S438. 2 stretches are compositionally biased toward low complexity: residues 825-868 and 878-908; these read GQSY…HNQR and QRNF…YRRF.

This sequence belongs to the 5'-3' exonuclease family. XRN2/RAT1 subfamily. In terms of assembly, interacts with cuff and Rai1; the interaction with cuff may inhibit its role in RNA degradation.

Its subcellular location is the nucleus. Its function is as follows. A 5'-3' exoribonuclease. May promote the termination of transcription by RNA polymerase II and promote RNA degradation. Involved in turnover of piRNA precursors. In Drosophila melanogaster (Fruit fly), this protein is 5'-3' exoribonuclease 2 homolog.